Consider the following 360-residue polypeptide: uncharacterized protein (360 aa).

A compositionally biased stretch (acidic residues) spans 22–32; it reads EEDVEPNEEAE. The tract at residues 22–55 is disordered; sequence EEDVEPNEEAEGPGGVHKKRRGARKKNRRQRMEG. The span at 37-50 shows a compositional bias: basic residues; the sequence is VHKKRRGARKKNRR.

This is an uncharacterized protein from Caenorhabditis elegans.